The sequence spans 334 residues: Iron-uptake system permease protein FeuB (334 aa).

Helical transmembrane passes span 9–29 (IILI…ILYG), 63–83 (AAGA…MQGI), 91–111 (PSIM…MVLL), 119–139 (MMIY…GLAA), 150–170 (LAII…AMSI), 191–211 (PDFL…AISL), 243–263 (VIIL…VGLV), 281–301 (PCSC…SRFI), and 305–325 (FETP…LYLI).

It belongs to the binding-protein-dependent transport system permease family. FecCD subfamily. The complex is composed of one ATP-binding protein (YusV), two transmembrane proteins (FeuB and FeuC) and a solute-binding protein (FeuA).

The protein resides in the cell membrane. The protein localises to the membrane raft. In terms of biological role, involved in the uptake of iron. Probably responsible for the translocation of the substrate across the membrane. Part of the ABC transporter complex FeuABC/YusV involved in import of the catecholate siderophores bacillibactin and enterobactin. This is Iron-uptake system permease protein FeuB (feuB) from Bacillus subtilis (strain 168).